We begin with the raw amino-acid sequence, 259 residues long: Proteasome subunit alpha (259 aa).

The protein belongs to the peptidase T1A family. As to quaternary structure, the 20S proteasome core is composed of 14 alpha and 14 beta subunits that assemble into four stacked heptameric rings, resulting in a barrel-shaped structure. The two inner rings, each composed of seven catalytic beta subunits, are sandwiched by two outer rings, each composed of seven alpha subunits. The catalytic chamber with the active sites is on the inside of the barrel. Has a gated structure, the ends of the cylinder being occluded by the N-termini of the alpha-subunits. Is capped at one or both ends by the proteasome regulatory ATPase, PAN.

It is found in the cytoplasm. The formation of the proteasomal ATPase PAN-20S proteasome complex, via the docking of the C-termini of PAN into the intersubunit pockets in the alpha-rings, triggers opening of the gate for substrate entry. Interconversion between the open-gate and close-gate conformations leads to a dynamic regulation of the 20S proteasome proteolysis activity. Functionally, component of the proteasome core, a large protease complex with broad specificity involved in protein degradation. The chain is Proteasome subunit alpha from Methanococcus maripaludis (strain C6 / ATCC BAA-1332).